We begin with the raw amino-acid sequence, 285 residues long: Probable endonuclease 4 (285 aa).

Residues His-69, His-109, Glu-145, Asp-179, His-182, His-216, Asp-229, His-231, and Glu-261 each contribute to the Zn(2+) site.

This sequence belongs to the AP endonuclease 2 family. Requires Zn(2+) as cofactor.

It catalyses the reaction Endonucleolytic cleavage to 5'-phosphooligonucleotide end-products.. Its function is as follows. Endonuclease IV plays a role in DNA repair. It cleaves phosphodiester bonds at apurinic or apyrimidinic (AP) sites, generating a 3'-hydroxyl group and a 5'-terminal sugar phosphate. In Shigella flexneri serotype 5b (strain 8401), this protein is Probable endonuclease 4.